The sequence spans 297 residues: Homoserine kinase (297 aa).

Residue 82–92 (PVSRGLGSSAA) coordinates ATP.

It belongs to the GHMP kinase family. Homoserine kinase subfamily.

The protein localises to the cytoplasm. The catalysed reaction is L-homoserine + ATP = O-phospho-L-homoserine + ADP + H(+). Its pathway is amino-acid biosynthesis; L-threonine biosynthesis; L-threonine from L-aspartate: step 4/5. Functionally, catalyzes the ATP-dependent phosphorylation of L-homoserine to L-homoserine phosphate. The polypeptide is Homoserine kinase (Clostridium botulinum (strain 657 / Type Ba4)).